The chain runs to 188 residues: Probable DNA-directed RNA polymerase subunit delta (188 aa).

The HTH HARE-type domain maps to 14–83; sequence LSMIEVARAI…GDNKWGLRSW (70 aa). Positions 117 to 188 are disordered; it reads GDEDAIDYSD…EDDEDDEEEE (72 aa).

It belongs to the RpoE family. In terms of assembly, RNAP is composed of a core of 2 alpha, a beta and a beta' subunits. The core is associated with a delta subunit and one of several sigma factors.

Participates in both the initiation and recycling phases of transcription. In the presence of the delta subunit, RNAP displays an increased specificity of transcription, a decreased affinity for nucleic acids, and an increased efficiency of RNA synthesis because of enhanced recycling. The polypeptide is Probable DNA-directed RNA polymerase subunit delta (Streptococcus uberis (strain ATCC BAA-854 / 0140J)).